Here is a 181-residue protein sequence, read N- to C-terminus: Germinal center-associated signaling and motility protein (181 aa).

Ser102 is subject to Phosphoserine. Residues Ala117 to Glu128 show a composition bias toward basic and acidic residues. The segment at Ala117–Gln181 is disordered. Tyr150 carries the phosphotyrosine modification.

Interacts with ACTB and MYH2; the interaction with MYH2 is increased by IL6-induced phosphorylation. Interacts (via C-terminus) with ARHGEF11 (via DH domain). Interacts with ARHGEF12. Interacts with SYK; the interaction increases after B-cell receptor stimulation, resulting in enhanced SYK autophosphorylation and activity. Phosphorylation on tyrosine residues can be induced by IL6. Phosphorylation is mediated by LYN. In terms of processing, targeted by the ubiquitin E3 ligase subunit FBXO10 to mediate its ubiquitination and degradation. As to expression, highly expressed in normal germinal center (GC) B-cells. Expressed in spleen and, to a lesser extent, bone marrow.

The protein resides in the cytoplasm. The protein localises to the cell membrane. Its function is as follows. Involved in the negative regulation of lymphocyte motility. It mediates the migration-inhibitory effects of IL6. Serves as a positive regulator of the RhoA signaling pathway. Enhancement of RhoA activation results in inhibition of lymphocyte and lymphoma cell motility by activation of its downstream effector ROCK. Is a regulator of B-cell receptor signaling, that acts through SYK kinase activation. This chain is Germinal center-associated signaling and motility protein (Gcsam), found in Mus musculus (Mouse).